The chain runs to 208 residues: Putative speedy protein E7 (208 aa).

Belongs to the Speedy/Ringo family.

The protein is Putative speedy protein E7 (SPDYE7P) of Homo sapiens (Human).